We begin with the raw amino-acid sequence, 65 residues long: Large ribosomal subunit protein bL35 (65 aa).

Belongs to the bacterial ribosomal protein bL35 family.

The chain is Large ribosomal subunit protein bL35 from Parabacteroides distasonis (strain ATCC 8503 / DSM 20701 / CIP 104284 / JCM 5825 / NCTC 11152).